The following is a 78-amino-acid chain: Acyl carrier protein (78 aa).

Positions Ser-2–Ala-77 constitute a Carrier domain. The residue at position 37 (Ser-37) is an O-(pantetheine 4'-phosphoryl)serine.

This sequence belongs to the acyl carrier protein (ACP) family. 4'-phosphopantetheine is transferred from CoA to a specific serine of apo-ACP by AcpS. This modification is essential for activity because fatty acids are bound in thioester linkage to the sulfhydryl of the prosthetic group.

The protein localises to the cytoplasm. Its pathway is lipid metabolism; fatty acid biosynthesis. Carrier of the growing fatty acid chain in fatty acid biosynthesis. In Vibrio cholerae serotype O1 (strain ATCC 39315 / El Tor Inaba N16961), this protein is Acyl carrier protein.